Here is a 209-residue protein sequence, read N- to C-terminus: Putative BTB/POZ domain-containing protein At2g40450 (209 aa).

The BTB domain maps to 24-98 (ADVRLKAGDS…IYRVDGSICS (75 aa)).

Its pathway is protein modification; protein ubiquitination. Its function is as follows. May act as a substrate-specific adapter of an E3 ubiquitin-protein ligase complex (CUL3-RBX1-BTB) which mediates the ubiquitination and subsequent proteasomal degradation of target proteins. The sequence is that of Putative BTB/POZ domain-containing protein At2g40450 from Arabidopsis thaliana (Mouse-ear cress).